Consider the following 403-residue polypeptide: Serine/threonine transporter SstT (403 aa).

10 helical membrane-spanning segments follow: residues 15–35 (LGLIPQIVIGIALGVGVAIVW), 49–69 (FISALKAVAPILVFLLVMTAI), 85–105 (LLYVVGTLCAALVAVLASFIF), 142–162 (ALLNANFVGILAWAMGLGMML), 183–203 (IVQLVIRCAPLGIFGLVAGTL), 218–238 (LAVIVGCMLFVALVTNPLIVF), 246–268 (YPLVFACLRGSAITAFFTRSSAA), 289–309 (ISIPLGATINMAGAAVTISVI), 317–337 (LGIGVDFATALLLCVVASLAA), and 362–382 (PDVAMQVVAIGFVISVVQDAT).

Belongs to the dicarboxylate/amino acid:cation symporter (DAACS) (TC 2.A.23) family.

The protein resides in the cell inner membrane. It catalyses the reaction L-serine(in) + Na(+)(in) = L-serine(out) + Na(+)(out). It carries out the reaction L-threonine(in) + Na(+)(in) = L-threonine(out) + Na(+)(out). In terms of biological role, involved in the import of serine and threonine into the cell, with the concomitant import of sodium (symport system). The sequence is that of Serine/threonine transporter SstT from Chromohalobacter salexigens (strain ATCC BAA-138 / DSM 3043 / CIP 106854 / NCIMB 13768 / 1H11).